The primary structure comprises 217 residues: ATP-dependent Clp protease proteolytic subunit (217 aa).

Catalysis depends on Ser120, which acts as the Nucleophile. His145 is a catalytic residue.

It belongs to the peptidase S14 family. As to quaternary structure, fourteen ClpP subunits assemble into 2 heptameric rings which stack back to back to give a disk-like structure with a central cavity, resembling the structure of eukaryotic proteasomes.

The protein localises to the cytoplasm. The enzyme catalyses Hydrolysis of proteins to small peptides in the presence of ATP and magnesium. alpha-casein is the usual test substrate. In the absence of ATP, only oligopeptides shorter than five residues are hydrolyzed (such as succinyl-Leu-Tyr-|-NHMec, and Leu-Tyr-Leu-|-Tyr-Trp, in which cleavage of the -Tyr-|-Leu- and -Tyr-|-Trp bonds also occurs).. Functionally, cleaves peptides in various proteins in a process that requires ATP hydrolysis. Has a chymotrypsin-like activity. Plays a major role in the degradation of misfolded proteins. The sequence is that of ATP-dependent Clp protease proteolytic subunit from Ralstonia nicotianae (strain ATCC BAA-1114 / GMI1000) (Ralstonia solanacearum).